Here is a 564-residue protein sequence, read N- to C-terminus: MKSMQYHPPTTTLVSEFNKEKYNNSNHYNDNNDNNNNNNNNNNDNNNNDNNNNNNNNNNSIINNESDNESNGTSNNYNDEANDNHHHHQDDEHHGNGNDNDNENYNNQNVNHEKLASIKNKNYNNNESDNESIEEINSNHNNDNNNNTNNNDNSSNNNNNNNNSNNNNNNNSKEINEDKENYNNCDQHHHNHNNNNNNKYNGGSSYNYNSKNCKEYINNLENLLKLSNKENKELYEKIISLGSILNEKKTLLSKYRNVLIDYLEDVHIYDENGNANPNYDNYNNTQQKSIKDFDVGKDLVKSNLNLQFHNYNNKDYNKEYNNNNNGNNNKDYNNNKEYNNINNNNISSNNNNNNNNNNNNNSSNKEYKEKEYKEKEYKEKEFKESKDSSLKRKSSSDDDGDDSGRDTKKYKPGRTVWTLEEEELYKEVFNHYGKNWKKIKTHFPDKSKSQVTSHGQYLIKINKLQDLQKVKSPPTLNITLNDIIEQLKQQQQQQQQQQQQQQQQQQQQQQQQQNNIVINNENTNDNNNHNNNNYNDNNNNSNNNNNFNNSNNNNTNKFIDEDDD.

3 disordered regions span residues 22–107 (YNNS…NYNN), 122–203 (NYNN…YNGG), and 310–410 (NYNN…TKKY). Residues 23-79 (NNSNHYNDNNDNNNNNNNNNNDNNNNDNNNNNNNNNNSIINNESDNESNGTSNNYND) are compositionally biased toward low complexity. A compositionally biased stretch (basic and acidic residues) spans 82–96 (NDNHHHHQDDEHHGN). 4 stretches are compositionally biased toward low complexity: residues 97 to 107 (GNDNDNENYNN), 135 to 173 (EINS…NNSK), 193 to 203 (NNNNNNKYNGG), and 310 to 364 (NYNN…NSSN). The span at 365–409 (KEYKEKEYKEKEYKEKEFKESKDSSLKRKSSSDDDGDDSGRDTKK) shows a compositional bias: basic and acidic residues. An SANT domain is found at 412–464 (PGRTVWTLEEEELYKEVFNHYGKNWKKIKTHFPDKSKSQVTSHGQYLIKINKL). Over residues 519-556 (NNENTNDNNNHNNNNYNDNNNNSNNNNNFNNSNNNNTN) the composition is skewed to low complexity. The interval 519 to 564 (NNENTNDNNNHNNNNYNDNNNNSNNNNNFNNSNNNNTNKFIDEDDD) is disordered.

The protein localises to the nucleus. The chain is Myb-like protein F (mybF) from Dictyostelium discoideum (Social amoeba).